The sequence spans 774 residues: Potassium/sodium hyperpolarization-activated cyclic nucleotide-gated channel 3 (774 aa).

Positions 1 to 48 (MEAEQRPAAGASEGATPGLEAVPPVAPPPATAASGPIPKSGPEPKRRH) are disordered. Topologically, residues 1–97 (MEAEQRPAAG…PYSDFRFYWD (97 aa)) are cytoplasmic. Positions 46–91 (RRHLGTLLQPTVNKFSLRVFGSHKAVEIEQERVKSAGAWIIHPYSD) are involved in subunit assembly. The chain crosses the membrane as a helical span at residues 98-118 (LIMLLLMVGNLIVLPVGITFF). The Extracellular portion of the chain corresponds to 119-124 (KEENSP). The chain crosses the membrane as a helical span at residues 125–145 (PWIVFNVLSDTFFLLDLVLNF). The Cytoplasmic segment spans residues 146–171 (RTGIVVEEGAEILLAPRAIRTRYLRT). Residues 172 to 192 (WFLVDLISSIPVDYIFLVVEL) form a helical membrane-spanning segment. Topologically, residues 193–201 (EPRLDAEVY) are extracellular. The chain crosses the membrane as a helical; Voltage-sensor span at residues 202–222 (KTARALRIVRFTKILSLLRLL). The Cytoplasmic portion of the chain corresponds to 223–253 (RLSRLIRYIHQWEEIFHMTYDLASAVVRIFN). The helical transmembrane segment at 254–274 (LIGMMLLLCHWDGCLQFLVPM) threads the bilayer. Residues 275-297 (LQDFPPDCWVSINHMVNHSWGRQ) lie on the Extracellular side of the membrane. A glycan (N-linked (GlcNAc...) asparagine) is linked at asparagine 291. The segment at residues 298–319 (YSHALFKAMSHMLCIGYGQQAP) is an intramembrane region (pore-forming). Residues 320–329 (VGMPDVWLTM) are Extracellular-facing. Residues 330–350 (LSMIVGATCYAMFIGHATALI) traverse the membrane as a helical segment. Residues 351-774 (QSLDSSRRQY…PRGLQLSANM (424 aa)) lie on the Cytoplasmic side of the membrane. The tract at residues 354-774 (DSSRRQYQEK…PRGLQLSANM (421 aa)) is interaction with KCTD3. 3',5'-cyclic AMP-binding residues include glycine 492, glutamate 493, cysteine 495, arginine 502, threonine 503, arginine 543, and arginine 546. A Phosphoserine modification is found at serine 634. Positions 682 to 774 (SLSRAGRSQV…PRGLQLSANM (93 aa)) are disordered. Over residues 751–763 (TAQPPRPPVPEPA) the composition is skewed to pro residues.

The protein belongs to the potassium channel HCN family. In terms of assembly, homotetramer. The potassium channel is composed of a homo- or heterotetrameric complex of pore-forming subunits. Interacts with HCN11. Interacts with KCTD3; this interaction increases cell surface expression and current density of this channel. Interacts with PEX5L. In terms of tissue distribution, detected in brain.

The protein localises to the cell membrane. It catalyses the reaction K(+)(in) = K(+)(out). The catalysed reaction is Na(+)(in) = Na(+)(out). Its activity is regulated as follows. Unlike HCN2 and HCN4, HCN3 is insensitive to cyclic nucleotides, such as cAMP or cGMP. This lack of sensitivity of HCN3, despite harboring a functional cyclic nucleotide-binding domain (CNBD), may be explained by its shorter C-terminal sequence, which may alter the normal autoinhibition of the channel. Inhibited by Cs(1+) and ZD7288. Phosphatidylinositol-4,5-bisphosphate (PIP(2)) shifts HCN3 activation to more depolarized potentials and accelerated activation kinetics. Functionally, hyperpolarization-activated ion channel that are permeable to sodium and potassium ions, with an about 3:1 preference for potassium ions. Contributes to the native pacemaker currents in heart (If) and in neurons (Ih). In particular, plays a pivotal role in maintaining excitability and promoting rhythmic burst firing within hypothalamic nuclei. Exerts a significant influence on the configuration of the cardiac action potential waveform. Does not appear to play a prominent role in the processing of acute, neuropathic, or inflammatory pain. This is Potassium/sodium hyperpolarization-activated cyclic nucleotide-gated channel 3 (HCN3) from Homo sapiens (Human).